Here is a 350-residue protein sequence, read N- to C-terminus: Histidinol-phosphate aminotransferase (350 aa).

Lysine 209 carries the N6-(pyridoxal phosphate)lysine modification.

It belongs to the class-II pyridoxal-phosphate-dependent aminotransferase family. Histidinol-phosphate aminotransferase subfamily. Homodimer. Pyridoxal 5'-phosphate serves as cofactor.

It catalyses the reaction L-histidinol phosphate + 2-oxoglutarate = 3-(imidazol-4-yl)-2-oxopropyl phosphate + L-glutamate. It participates in amino-acid biosynthesis; L-histidine biosynthesis; L-histidine from 5-phospho-alpha-D-ribose 1-diphosphate: step 7/9. The protein is Histidinol-phosphate aminotransferase of Christiangramia forsetii (strain DSM 17595 / CGMCC 1.15422 / KT0803) (Gramella forsetii).